The primary structure comprises 449 residues: UDP-N-acetylmuramate--L-alanine ligase (449 aa).

An ATP-binding site is contributed by 110-116; it reads GTHGKTT.

It belongs to the MurCDEF family.

The protein resides in the cytoplasm. The enzyme catalyses UDP-N-acetyl-alpha-D-muramate + L-alanine + ATP = UDP-N-acetyl-alpha-D-muramoyl-L-alanine + ADP + phosphate + H(+). Its pathway is cell wall biogenesis; peptidoglycan biosynthesis. In terms of biological role, cell wall formation. The chain is UDP-N-acetylmuramate--L-alanine ligase from Desulfitobacterium hafniense (strain Y51).